The sequence spans 724 residues: Outer spore wall protein 2 (724 aa).

Disordered regions lie at residues 407–427 (NSGQDFTDGDNEDQDKGKNRV) and 477–497 (TSGGQKRVKSPTKADTGYDDK).

It is found in the cytoplasm. The protein resides in the prospore membrane. Functionally, may be involved in a late step of spore wall assembly. This is Outer spore wall protein 2 (OSW2) from Saccharomyces cerevisiae (strain ATCC 204508 / S288c) (Baker's yeast).